Reading from the N-terminus, the 288-residue chain is Acetyl-coenzyme A carboxylase carboxyl transferase subunit beta (288 aa).

One can recognise a CoA carboxyltransferase N-terminal domain in the interval 34-288 (LWVKCSRCNE…ANILSLHGTN (255 aa)). Zn(2+) contacts are provided by Cys38, Cys41, Cys57, and Cys60. The C4-type zinc finger occupies 38 to 60 (CSRCNEILYTKELDKNFKVCHKC).

The protein belongs to the AccD/PCCB family. As to quaternary structure, acetyl-CoA carboxylase is a heterohexamer composed of biotin carboxyl carrier protein (AccB), biotin carboxylase (AccC) and two subunits each of ACCase subunit alpha (AccA) and ACCase subunit beta (AccD). Zn(2+) serves as cofactor.

Its subcellular location is the cytoplasm. The enzyme catalyses N(6)-carboxybiotinyl-L-lysyl-[protein] + acetyl-CoA = N(6)-biotinyl-L-lysyl-[protein] + malonyl-CoA. It participates in lipid metabolism; malonyl-CoA biosynthesis; malonyl-CoA from acetyl-CoA: step 1/1. In terms of biological role, component of the acetyl coenzyme A carboxylase (ACC) complex. Biotin carboxylase (BC) catalyzes the carboxylation of biotin on its carrier protein (BCCP) and then the CO(2) group is transferred by the transcarboxylase to acetyl-CoA to form malonyl-CoA. The sequence is that of Acetyl-coenzyme A carboxylase carboxyl transferase subunit beta from Desulforamulus reducens (strain ATCC BAA-1160 / DSM 100696 / MI-1) (Desulfotomaculum reducens).